The following is a 148-amino-acid chain: 3-dehydroquinate dehydratase 2 (148 aa).

Tyr-24 acts as the Proton acceptor in catalysis. Substrate contacts are provided by Asn-75, His-81, and Asp-88. Catalysis depends on His-101, which acts as the Proton donor. Residues 102–103 (LS) and Arg-112 each bind substrate.

This sequence belongs to the type-II 3-dehydroquinase family. Homododecamer.

The enzyme catalyses 3-dehydroquinate = 3-dehydroshikimate + H2O. It participates in metabolic intermediate biosynthesis; chorismate biosynthesis; chorismate from D-erythrose 4-phosphate and phosphoenolpyruvate: step 3/7. In terms of biological role, catalyzes a trans-dehydration via an enolate intermediate. This Pseudomonas aeruginosa (strain ATCC 15692 / DSM 22644 / CIP 104116 / JCM 14847 / LMG 12228 / 1C / PRS 101 / PAO1) protein is 3-dehydroquinate dehydratase 2 (aroQ2).